The following is a 118-amino-acid chain: Eukaryotic translation initiation factor 4E-binding protein 1 (118 aa).

At Ser-2 the chain carries N-acetylserine. Positions Val-27–Gly-48 are disordered. Over residues Tyr-34 to Gly-48 the composition is skewed to polar residues. Residue Thr-37 is modified to Phosphothreonine; by MTOR. A Phosphothreonine modification is found at Thr-41. Ser-44 bears the Phosphoserine mark. Thr-46 carries the phosphothreonine; by MTOR modification. Thr-50 is modified (phosphothreonine). Tyr-54 carries the post-translational modification Phosphotyrosine. Positions Tyr-54–Met-60 match the YXXXXLphi motif motif. A Glycyl lysine isopeptide (Lys-Gly) (interchain with G-Cter in ubiquitin) cross-link involves residue Lys-57. Residues Asn-64–Ile-118 are disordered. Ser-65 carries the phosphoserine; by DYRK2, MAPK1, MAPK3 and MTOR modification. Phosphothreonine; by MTOR is present on Thr-70. Residue Thr-77 is modified to Phosphothreonine. Phosphoserine is present on residues Ser-83 and Ser-100. Ser-101 carries the phosphoserine; by DYRK2 modification. Ser-112 is modified (phosphoserine). Positions Phe-114–Ile-118 match the TOS motif motif.

This sequence belongs to the eIF4E-binding protein family. In terms of assembly, hypophosphorylated EIF4EBP1 competes with EIF4G1/EIF4G3 to interact with EIF4E; insulin stimulated MAP-kinase (MAPK1 and MAPK3) or mTORC1 phosphorylation of EIF4EBP1 causes dissociation of the complex allowing EIF4G1/EIF4G3 to bind and consequent initiation of translation. Interacts (via TOS motif) with RPTOR; promoting phosphorylation by mTORC1. Phosphorylated on serine and threonine residues in response to insulin, EGF and PDGF. Phosphorylation at Thr-37, Thr-46, Ser-65 and Thr-70, corresponding to the hyperphosphorylated form, is regulated by mTORC1 and abolishes binding to EIF4E. In terms of processing, ubiquitinated: when eIF4E levels are low, hypophosphorylated form is ubiquitinated by the BCR(KLHL25) complex, leading to its degradation and serving as a homeostatic mechanism to maintain translation and prevent eIF4E inhibition when eIF4E levels are low. Not ubiquitinated when hyperphosphorylated (at Thr-37, Thr-46, Ser-65 and Thr-70) or associated with eIF4E.

The protein localises to the cytoplasm. The protein resides in the nucleus. Repressor of translation initiation that regulates EIF4E activity by preventing its assembly into the eIF4F complex: hypophosphorylated form competes with EIF4G1/EIF4G3 and strongly binds to EIF4E, leading to repress translation. In contrast, hyperphosphorylated form dissociates from EIF4E, allowing interaction between EIF4G1/EIF4G3 and EIF4E, leading to initiation of translation. Mediates the regulation of protein translation by hormones, growth factors and other stimuli that signal through the MAP kinase and mTORC1 pathways. The sequence is that of Eukaryotic translation initiation factor 4E-binding protein 1 (EIF4EBP1) from Bos taurus (Bovine).